Here is a 459-residue protein sequence, read N- to C-terminus: Serine--tRNA ligase (459 aa).

254–256 (TAE) lines the L-serine pocket. Residues 285–287 (RKE) and valine 301 contribute to the ATP site. Glutamate 308 contacts L-serine. 372–375 (EMVS) is an ATP binding site. Threonine 408 serves as a coordination point for L-serine.

It belongs to the class-II aminoacyl-tRNA synthetase family. Type-1 seryl-tRNA synthetase subfamily. Homodimer. The tRNA molecule binds across the dimer.

Its subcellular location is the cytoplasm. It carries out the reaction tRNA(Ser) + L-serine + ATP = L-seryl-tRNA(Ser) + AMP + diphosphate + H(+). The catalysed reaction is tRNA(Sec) + L-serine + ATP = L-seryl-tRNA(Sec) + AMP + diphosphate + H(+). It participates in aminoacyl-tRNA biosynthesis; selenocysteinyl-tRNA(Sec) biosynthesis; L-seryl-tRNA(Sec) from L-serine and tRNA(Sec): step 1/1. In terms of biological role, catalyzes the attachment of serine to tRNA(Ser). Is also able to aminoacylate tRNA(Sec) with serine, to form the misacylated tRNA L-seryl-tRNA(Sec), which will be further converted into selenocysteinyl-tRNA(Sec). The sequence is that of Serine--tRNA ligase from Desulfurococcus amylolyticus (strain DSM 18924 / JCM 16383 / VKM B-2413 / 1221n) (Desulfurococcus kamchatkensis).